The primary structure comprises 42 residues: Photosystem II reaction center protein J (42 aa).

Residues Ile-10–Phe-30 traverse the membrane as a helical segment.

The protein belongs to the PsbJ family. In terms of assembly, PSII is composed of 1 copy each of membrane proteins PsbA, PsbB, PsbC, PsbD, PsbE, PsbF, PsbH, PsbI, PsbJ, PsbK, PsbL, PsbM, PsbT, PsbX, PsbY, PsbZ, Psb30/Ycf12, at least 3 peripheral proteins of the oxygen-evolving complex and a large number of cofactors. It forms dimeric complexes.

The protein localises to the plastid. The protein resides in the chloroplast thylakoid membrane. One of the components of the core complex of photosystem II (PSII). PSII is a light-driven water:plastoquinone oxidoreductase that uses light energy to abstract electrons from H(2)O, generating O(2) and a proton gradient subsequently used for ATP formation. It consists of a core antenna complex that captures photons, and an electron transfer chain that converts photonic excitation into a charge separation. This is Photosystem II reaction center protein J from Chlorokybus atmophyticus (Soil alga).